The primary structure comprises 273 residues: uncharacterized protein (273 aa).

10-34 (VITGAATGIGQATAEVFANEGARVI) contacts NAD(+). Position 142 (Ser-142) interacts with substrate. Tyr-155 serves as the catalytic Proton acceptor.

The protein belongs to the short-chain dehydrogenases/reductases (SDR) family.

This is an uncharacterized protein from Bacillus subtilis (strain 168).